A 408-amino-acid chain; its full sequence is UDP-N-acetylglucosamine--N-acetylmuramyl-(pentapeptide) pyrophosphoryl-undecaprenol N-acetylglucosamine transferase (408 aa).

Residues 1 to 20 (MNDTVKKPTGGRGDDPLPAG) form a disordered region. UDP-N-acetyl-alpha-D-glucosamine contacts are provided by residues 41–43 (TAG), Asn160, Arg197, Ser231, and Gln327.

This sequence belongs to the glycosyltransferase 28 family. MurG subfamily.

The protein resides in the cell membrane. It carries out the reaction di-trans,octa-cis-undecaprenyl diphospho-N-acetyl-alpha-D-muramoyl-L-alanyl-D-glutamyl-meso-2,6-diaminopimeloyl-D-alanyl-D-alanine + UDP-N-acetyl-alpha-D-glucosamine = di-trans,octa-cis-undecaprenyl diphospho-[N-acetyl-alpha-D-glucosaminyl-(1-&gt;4)]-N-acetyl-alpha-D-muramoyl-L-alanyl-D-glutamyl-meso-2,6-diaminopimeloyl-D-alanyl-D-alanine + UDP + H(+). Its pathway is cell wall biogenesis; peptidoglycan biosynthesis. Functionally, cell wall formation. Catalyzes the transfer of a GlcNAc subunit on undecaprenyl-pyrophosphoryl-MurNAc-pentapeptide (lipid intermediate I) to form undecaprenyl-pyrophosphoryl-MurNAc-(pentapeptide)GlcNAc (lipid intermediate II). This chain is UDP-N-acetylglucosamine--N-acetylmuramyl-(pentapeptide) pyrophosphoryl-undecaprenol N-acetylglucosamine transferase, found in Mycobacterium avium (strain 104).